A 247-amino-acid polypeptide reads, in one-letter code: MWGTSNCACAKFQIRRRYARPYRRRHIRRYRRRRRHFRRRRFTTNRVYTLRLTRQFQFKIQKQTTSVGNLIFNADYITFALDDFLQAVPNPHALNFEDYRIKLAKMEMRPTGGHYTVQSNGFGHTAVIQDSRITKFKTTADQTQDPLAPFDGAKKWFVSRGFKRLLRPKPQITIEDLTTANQSAALWLNSARTGWIPLQGGPNSAGTKVRHYGIAFSFPQPEQTITYVTKLTLYVQFRQFAPNNPST.

The segment at 1–40 (MWGTSNCACAKFQIRRRYARPYRRRHIRRYRRRRRHFRRR) is DNA-binding. Residues 15-44 (RRRYARPYRRRHIRRYRRRRRHFRRRRFTT) form a nuclear localization signals region.

It belongs to the circoviridae capsid protein family. Homomultimer. Assembles in the nucleus, presumably in an immature form, then migrates to the cytoplasm once assembled as mature virion. Interacts with Rep; this interaction relocates Rep into the nucleus.

The protein resides in the host nucleus. The protein localises to the virion. Self-assembles to form the virion icosahedral capsid with a T=1 symmetry. This very small capsid (17 - 22 nm in diameter) allows the virus to be very stable in the environment and resistant to some disinfectants, including detergents. Essential for the initial attachment to heparan sulfate moieties and chondroitin sulfate B of the host cell surface proteoglycans. After attachment, the virus is endocytosed and traffics to the nucleus. The capsid protein binds and transports the viral genome and Rep across the nuclear envelope. The sequence is that of Capsid protein (Cap) from Beak and feather disease virus (BFDV).